Here is a 457-residue protein sequence, read N- to C-terminus: Histidine--tRNA ligase (457 aa).

It belongs to the class-II aminoacyl-tRNA synthetase family. As to quaternary structure, homodimer.

The protein localises to the cytoplasm. The catalysed reaction is tRNA(His) + L-histidine + ATP = L-histidyl-tRNA(His) + AMP + diphosphate + H(+). In Mesoplasma florum (strain ATCC 33453 / NBRC 100688 / NCTC 11704 / L1) (Acholeplasma florum), this protein is Histidine--tRNA ligase.